A 303-amino-acid chain; its full sequence is Ribosomal RNA small subunit methyltransferase H (303 aa).

S-adenosyl-L-methionine-binding positions include 32 to 34 (GGH), Asp-52, Phe-78, Asp-99, and Gln-106.

Belongs to the methyltransferase superfamily. RsmH family.

It is found in the cytoplasm. It catalyses the reaction cytidine(1402) in 16S rRNA + S-adenosyl-L-methionine = N(4)-methylcytidine(1402) in 16S rRNA + S-adenosyl-L-homocysteine + H(+). In terms of biological role, specifically methylates the N4 position of cytidine in position 1402 (C1402) of 16S rRNA. In Acinetobacter baylyi (strain ATCC 33305 / BD413 / ADP1), this protein is Ribosomal RNA small subunit methyltransferase H.